Consider the following 707-residue polypeptide: DCC-interacting protein 13-alpha (707 aa).

The tract at residues 1–428 (MPGIDKLPIE…PPTARTSSSG (428 aa)) is required for RAB5A binding. The BAR domain occupies 3 to 268 (GIDKLPIEET…DPLYLPDPDP (266 aa)). Residues 234-257 (QNVRREMDGDVETMQQTIEDLEVA) adopt a coiled-coil conformation. Positions 277–375 (LTRKAGYLNA…WICTINNISK (99 aa)) constitute a PH domain. 3 disordered regions span residues 397 to 433 (AVTP…LGSE), 466 to 490 (GQAK…STKS), and 636 to 707 (EKQK…ESEA). Phosphothreonine is present on Thr399. Ser401 bears the Phosphoserine mark. The F&amp;H signature appears at 403-414 (SFQQRHESLRPG). Ser410 is subject to Phosphoserine; by PKA. Residues 495–655 (SILHQLFIVR…EKQQKELSKQ (161 aa)) enclose the PID domain. Residues 620 to 670 (LAKQIALHAELDRRASEKQKEIERVKEKQQKELSKQKQIEKDLEEQSRLIA) are a coiled coil. The segment covering 636 to 666 (EKQKEIERVKEKQQKELSKQKQIEKDLEEQS) has biased composition (basic and acidic residues). The segment covering 679–691 (GSEGQLVLSSSQS) has biased composition (low complexity). Ser691 and Ser694 each carry phosphoserine. Basic and acidic residues predominate over residues 698–707 (EEGKKRESEA).

As to quaternary structure, homodimer. Binds RAB5A/Rab5 through an N-terminal domain. This interaction is essential for its recruitment to endosomal membranes as well as its role in cell proliferation. Binds DCC and the catalytic domain of the inactive form of AKT2 through its PID domain. Binds PIK3CA and subunits of the NuRD/MeCP1 complex. Interacts with OCRL and INPP5B. Interacts with NTRK2. Interacts with APPL2; interaction is independent of follicle stimulating hormone stimulation; interaction is decreased by adiponectin in a time-dependent manner. Forms a complex with APPL2 and RUVBL2. Forms a complex comprising APPL2, RUVBL2, CTNNB1, HDAC1 and HDAC2; interaction reduces interaction between CTNNB1, HDAC1, HDAC2 and RUVBL2 leading to the decrease of deacetylase activity of this complex; affects the recruitment of repressive complexes to the Wnt target genes. Interacts with ANXA2. Interacts with TGFBR1; interaction is TGF beta dependent; mediates trafficking of the TGFBR1 from the endosomes to the nucleus via microtubules in a TRAF6-dependent manner. Interacts with PRKCZ. Interacts with PIK3R1 and APPL2. Interacts with ADIPOR1; ADIPOQ enhances this interaction; inhibites adiponectin-stimulated binding of APPL2 to ADIPOR1. Phosphorylation at Ser-410 by PKA severely impairs binding to OCRL. As to expression, expressed in insulin-target tissues including skeletal muscle, liver, fat, and brain.

The protein resides in the early endosome membrane. It localises to the nucleus. It is found in the cytoplasm. The protein localises to the endosome. Its subcellular location is the cell projection. The protein resides in the ruffle. It localises to the cytoplasmic vesicle. It is found in the phagosome. In terms of biological role, multifunctional adapter protein that binds to various membrane receptors, nuclear factors and signaling proteins to regulate many processes, such as cell proliferation, immune response, endosomal trafficking and cell metabolism. Regulates signaling pathway leading to cell proliferation through interaction with RAB5A and subunits of the NuRD/MeCP1 complex. Functions as a positive regulator of innate immune response via activation of AKT1 signaling pathway by forming a complex with APPL1 and PIK3R1. Inhibits Fc-gamma receptor-mediated phagocytosis through PI3K/Akt signaling in macrophages. Regulates TLR4 signaling in activated macrophages. Involved in trafficking of the TGFBR1 from the endosomes to the nucleus via microtubules in a TRAF6-dependent manner. Plays a role in cell metabolism by regulating adiponecting and insulin signaling pathways. Required for fibroblast migration through HGF cell signaling. Positive regulator of beta-catenin/TCF-dependent transcription through direct interaction with RUVBL2/reptin resulting in the relief of RUVBL2-mediated repression of beta-catenin/TCF target genes by modulating the interactions within the beta-catenin-reptin-HDAC complex. This Mus musculus (Mouse) protein is DCC-interacting protein 13-alpha.